The sequence spans 509 residues: Histidine--tRNA ligase, cytoplasmic (509 aa).

Ala2 carries the post-translational modification N-acetylalanine. One can recognise a WHEP-TRS domain in the interval 3 to 59 (DRAALEELVRLQGAHVRGLKEQKASAEQIEEEVTKLLKLKAQLGQDEGKQKFVLKTP). Ser66 is modified (phosphoserine). Residues 130–132 (DLT), Arg157, Gln173, Asp177, Arg326, and 330–331 (YY) each bind L-histidine. At Ser356 the chain carries Phosphoserine.

The protein belongs to the class-II aminoacyl-tRNA synthetase family. As to quaternary structure, homodimer.

Its subcellular location is the cytoplasm. The enzyme catalyses tRNA(His) + L-histidine + ATP = L-histidyl-tRNA(His) + AMP + diphosphate + H(+). Its function is as follows. Catalyzes the ATP-dependent ligation of histidine to the 3'-end of its cognate tRNA, via the formation of an aminoacyl-adenylate intermediate (His-AMP). Plays a role in axon guidance. This is Histidine--tRNA ligase, cytoplasmic (Hars1) from Mus musculus (Mouse).